We begin with the raw amino-acid sequence, 338 residues long: Nicotinate-nucleotide--dimethylbenzimidazole phosphoribosyltransferase (338 aa).

The active-site Proton acceptor is glutamate 305.

Belongs to the CobT family.

The catalysed reaction is 5,6-dimethylbenzimidazole + nicotinate beta-D-ribonucleotide = alpha-ribazole 5'-phosphate + nicotinate + H(+). It participates in nucleoside biosynthesis; alpha-ribazole biosynthesis; alpha-ribazole from 5,6-dimethylbenzimidazole: step 1/2. Its function is as follows. Catalyzes the synthesis of alpha-ribazole-5'-phosphate from nicotinate mononucleotide (NAMN) and 5,6-dimethylbenzimidazole (DMB). The protein is Nicotinate-nucleotide--dimethylbenzimidazole phosphoribosyltransferase of Sinorhizobium medicae (strain WSM419) (Ensifer medicae).